Consider the following 358-residue polypeptide: Probable branched-chain-amino-acid aminotransferase (358 aa).

An N6-(pyridoxal phosphate)lysine modification is found at K196.

Belongs to the class-IV pyridoxal-phosphate-dependent aminotransferase family. Pyridoxal 5'-phosphate is required as a cofactor.

The enzyme catalyses L-leucine + 2-oxoglutarate = 4-methyl-2-oxopentanoate + L-glutamate. It catalyses the reaction L-isoleucine + 2-oxoglutarate = (S)-3-methyl-2-oxopentanoate + L-glutamate. The catalysed reaction is L-valine + 2-oxoglutarate = 3-methyl-2-oxobutanoate + L-glutamate. It participates in amino-acid biosynthesis; L-isoleucine biosynthesis; L-isoleucine from 2-oxobutanoate: step 4/4. It functions in the pathway amino-acid biosynthesis; L-leucine biosynthesis; L-leucine from 3-methyl-2-oxobutanoate: step 4/4. The protein operates within amino-acid biosynthesis; L-valine biosynthesis; L-valine from pyruvate: step 4/4. Acts on leucine, isoleucine and valine. The chain is Probable branched-chain-amino-acid aminotransferase (ilvE) from Staphylococcus epidermidis (strain ATCC 35984 / DSM 28319 / BCRC 17069 / CCUG 31568 / BM 3577 / RP62A).